The sequence spans 201 residues: Esterase TesA (201 aa).

The signal sequence occupies residues 1 to 21 (MRALLLSGCLALVLLTQQAAA). The Nucleophile role is filled by Ser30. Active-site residues include Asp177 and His180.

The protein belongs to the 'GDSL' lipolytic enzyme family.

The protein resides in the secreted. It carries out the reaction a carboxylic ester + H2O = an alcohol + a carboxylate + H(+). Esterase that exhibits the highest activity towards Tween detergents and p-nitrophenyl esters of short acyl chain length. Also displays a low thioesterase activity towards palmitoyl-coenzyme A, but is not active towards acetyl-coenzyme A. The protein is Esterase TesA (tesA) of Pseudomonas aeruginosa (strain ATCC 15692 / DSM 22644 / CIP 104116 / JCM 14847 / LMG 12228 / 1C / PRS 101 / PAO1).